Reading from the N-terminus, the 56-residue chain is Conotoxin Bu12 (56 aa).

The N-terminal stretch at 1–2 (TA) is a signal peptide. The propeptide occupies 3–25 (EDSRGTQLHRALRKATKLPVSTR). Cystine bridges form between C26–C40, C33–C44, and C39–C49.

This sequence belongs to the conotoxin O1 superfamily. Expressed by the venom duct.

It localises to the secreted. The polypeptide is Conotoxin Bu12 (Conus bullatus (Bubble cone)).